The primary structure comprises 332 residues: Ketol-acid reductoisomerase (NADP(+)) 2 (332 aa).

A KARI N-terminal Rossmann domain is found at alanine 2–threonine 182. NADP(+) is bound by residues tyrosine 25 to glutamine 28, serine 51, serine 53, and aspartate 83 to glutamine 86. Histidine 108 is an active-site residue. NADP(+) is bound at residue glycine 134. One can recognise a KARI C-terminal knotted domain in the interval threonine 183–valine 328. The Mg(2+) site is built by aspartate 191, glutamate 195, glutamate 227, and glutamate 231. Substrate is bound at residue serine 252.

Belongs to the ketol-acid reductoisomerase family. It depends on Mg(2+) as a cofactor.

The enzyme catalyses (2R)-2,3-dihydroxy-3-methylbutanoate + NADP(+) = (2S)-2-acetolactate + NADPH + H(+). The catalysed reaction is (2R,3R)-2,3-dihydroxy-3-methylpentanoate + NADP(+) = (S)-2-ethyl-2-hydroxy-3-oxobutanoate + NADPH + H(+). It participates in amino-acid biosynthesis; L-isoleucine biosynthesis; L-isoleucine from 2-oxobutanoate: step 2/4. Its pathway is amino-acid biosynthesis; L-valine biosynthesis; L-valine from pyruvate: step 2/4. In terms of biological role, involved in the biosynthesis of branched-chain amino acids (BCAA). Catalyzes an alkyl-migration followed by a ketol-acid reduction of (S)-2-acetolactate (S2AL) to yield (R)-2,3-dihydroxy-isovalerate. In the isomerase reaction, S2AL is rearranged via a Mg-dependent methyl migration to produce 3-hydroxy-3-methyl-2-ketobutyrate (HMKB). In the reductase reaction, this 2-ketoacid undergoes a metal-dependent reduction by NADPH to yield (R)-2,3-dihydroxy-isovalerate. The sequence is that of Ketol-acid reductoisomerase (NADP(+)) 2 from Streptomyces coelicolor (strain ATCC BAA-471 / A3(2) / M145).